Reading from the N-terminus, the 341-residue chain is Phenylalanine--tRNA ligase alpha subunit (341 aa).

Glutamate 256 contacts Mg(2+).

It belongs to the class-II aminoacyl-tRNA synthetase family. Phe-tRNA synthetase alpha subunit type 1 subfamily. Tetramer of two alpha and two beta subunits. The cofactor is Mg(2+).

Its subcellular location is the cytoplasm. The enzyme catalyses tRNA(Phe) + L-phenylalanine + ATP = L-phenylalanyl-tRNA(Phe) + AMP + diphosphate + H(+). The sequence is that of Phenylalanine--tRNA ligase alpha subunit from Chlamydia caviae (strain ATCC VR-813 / DSM 19441 / 03DC25 / GPIC) (Chlamydophila caviae).